The following is a 364-amino-acid chain: Methylenetetrahydrofolate--tRNA-(uracil-5-)-methyltransferase TrmFO (364 aa).

11–16 (GAGLAG) lines the FAD pocket. Over residues 335 to 352 (SYLNQPCSSANDPTSSLL) the composition is skewed to polar residues. The segment at 335 to 364 (SYLNQPCSSANDPTSSLLDRSPAQRDIPLQ) is disordered.

This sequence belongs to the MnmG family. TrmFO subfamily. FAD serves as cofactor.

It localises to the cytoplasm. It carries out the reaction uridine(54) in tRNA + (6R)-5,10-methylene-5,6,7,8-tetrahydrofolate + NADH + H(+) = 5-methyluridine(54) in tRNA + (6S)-5,6,7,8-tetrahydrofolate + NAD(+). The catalysed reaction is uridine(54) in tRNA + (6R)-5,10-methylene-5,6,7,8-tetrahydrofolate + NADPH + H(+) = 5-methyluridine(54) in tRNA + (6S)-5,6,7,8-tetrahydrofolate + NADP(+). Catalyzes the folate-dependent formation of 5-methyl-uridine at position 54 (M-5-U54) in all tRNAs. This Prochlorococcus marinus (strain MIT 9313) protein is Methylenetetrahydrofolate--tRNA-(uracil-5-)-methyltransferase TrmFO.